The sequence spans 203 residues: LexA repressor (203 aa).

Residues 28–48 (VRELCDELGFKSPNTAHFHLK) constitute a DNA-binding region (H-T-H motif). Catalysis depends on for autocatalytic cleavage activity residues Ser122 and Lys159.

Belongs to the peptidase S24 family. Homodimer.

The catalysed reaction is Hydrolysis of Ala-|-Gly bond in repressor LexA.. Represses a number of genes involved in the response to DNA damage (SOS response), including recA and lexA. In the presence of single-stranded DNA, RecA interacts with LexA causing an autocatalytic cleavage which disrupts the DNA-binding part of LexA, leading to derepression of the SOS regulon and eventually DNA repair. The sequence is that of LexA repressor from Desulfatibacillum aliphaticivorans.